The following is a 218-amino-acid chain: Peroxiredoxin-like 2A (218 aa).

Residues 3 to 101 (MWSIGAGAIG…DELGVPLYAV (99 aa)) are thioredoxin fold. Catalysis depends on redox-active residues C74 and C77.

It belongs to the peroxiredoxin-like PRXL2 family. PRXL2A subfamily.

It is found in the cytoplasm. The protein resides in the secreted. Involved in redox regulation of the cell. Acts as an antioxidant. Inhibits TNFSF11-induced NFKB1 and JUN activation and osteoclast differentiation. May affect bone resorption and help to maintain bone mass. Acts as a negative regulator of macrophage-mediated inflammation by inhibiting macrophage production of inflammatory cytokines, probably through suppression of the MAPK signaling pathway. The polypeptide is Peroxiredoxin-like 2A (PRXL2A) (Bos taurus (Bovine)).